A 222-amino-acid polypeptide reads, in one-letter code: Ras-related protein Rab-21 (222 aa).

An N-acetylalanine modification is found at A2. GTP-binding residues include G26, G29, K30, T31, S32, N43, D44, H46, T48, and T49. T31 provides a ligand contact to Mg(2+). The Switch 1 motif lies at 41 to 54 (KFNDKHITTLQASF). Mg(2+) is bound by residues T49 and D72. The Switch 2 motif lies at 74-92 (AGQERFHALGPIYYRDSNG). G75, N130, K131, D133, A161, and K162 together coordinate GTP. S-geranylgeranyl cysteine attachment occurs at residues C218 and C219. C219 is modified (cysteine methyl ester). A propeptide spans 220-222 (SSG) (removed in mature form).

Belongs to the small GTPase superfamily. Rab family. In terms of assembly, interacts with the cytoplasmic tail of integrins ITGA1, ITGA2, ITGA5, ITGA6, ITGA11 and ITGB1; this interaction is dependent upon its GDP/GTP cycle. Interacts with RABGEF1 (via VPS9 domain). Interacts with ANKRD27. Interacts with VAMP7. Interacts (in GTP-bound form) with VAMP8 in response to starvation; the interaction probably regulates VAMP8 endolysosomal trafficking. Interacts (active GTP-bound form) with TMED10; the interaction is indirect and regulates TMED10 abundance and localization at the Golgi. Requires Mg(2+) as cofactor.

It is found in the endoplasmic reticulum membrane. Its subcellular location is the golgi apparatus. It localises to the trans-Golgi network. The protein resides in the golgi apparatus membrane. The protein localises to the early endosome membrane. It is found in the cytoplasmic vesicle membrane. Its subcellular location is the cleavage furrow. It localises to the cell projection. The protein resides in the neuron projection. It carries out the reaction GTP + H2O = GDP + phosphate + H(+). With respect to regulation, regulated by guanine nucleotide exchange factors (GEFs) including ANKRD27 and RABGEF1, which promote the exchange of bound GDP for free GTP. Regulated by GTPase activating proteins (GAPs) which increase the GTP hydrolysis activity. Inhibited by GDP dissociation inhibitors (GDIs). In terms of biological role, the small GTPases Rab are key regulators of intracellular membrane trafficking, from the formation of transport vesicles to their fusion with membranes. Rabs cycle between an inactive GDP-bound form and an active GTP-bound form that is able to recruit to membranes different sets of downstream effectors directly responsible for vesicle formation, movement, tethering and fusion. RAB21 is involved in membrane trafficking control. Regulates integrin internalization and recycling, but does not influence the traffic of endosomally translocated receptors in general. As a result, may regulate cell adhesion and migration. During the mitosis of adherent cells, controls the endosomal trafficking of integrins which is required for the successful completion of cytokinesis. Involved in neurite growth. Following SBF2/MTMT13-mediated activation in response to starvation-induced autophagy, binds to and regulates SNARE protein VAMP8 endolysosomal transport required for SNARE-mediated autophagosome-lysosome fusion. Modulates protein levels of the cargo receptors TMED2 and TMED10, and required for appropriate Golgi localization of TMED10. This chain is Ras-related protein Rab-21, found in Mus musculus (Mouse).